Reading from the N-terminus, the 555-residue chain is Myo-inositol transporter 2 (555 aa).

Residues 1–61 (MSSTLDTITP…NLVRAENEDK (61 aa)) are Cytoplasmic-facing. The helical transmembrane segment at 62–82 (VTPYFMFLISVAAIAGFLFGY) threads the bilayer. The Extracellular portion of the chain corresponds to 83–108 (DTGIVGAALPMVGTSLGHTLSATESE). Residues 109 to 129 (IITAGTTIGAIFGASILGTMA) form a helical membrane-spanning segment. The Cytoplasmic segment spans residues 130–142 (DKLGRKWAMIISD). The chain crosses the membrane as a helical span at residues 143-163 (FAFTAGAIIIAASYSVPQIIV). Residues 164–165 (GR) are Extracellular-facing. Residues 166–186 (LVLGVGVGGAAVIAPLYIAEL) form a helical membrane-spanning segment. At 187–200 (APTAVRGRCVGANA) the chain is on the cytoplasmic side. Residues 201–221 (FCIPFGQVVASAIGAGFQAGV) traverse the membrane as a helical segment. Residues 222-228 (PYHIGWR) lie on the Extracellular side of the membrane. Residues 229–249 (VLFGLGVVPSVVQLCLMHFLP) form a helical membrane-spanning segment. The Cytoplasmic portion of the chain corresponds to 250–328 (ESPRVLVLRG…AIISVSGVQA (79 aa)). Residues 329–349 (FGQLTGFNTLLYYSGTIFGLL) form a helical membrane-spanning segment. Residues 350–355 (GLKNGA) are Extracellular-facing. The chain crosses the membrane as a helical span at residues 356–376 (AAGLIPSCLNALFVFIGMSIV). Topologically, residues 377 to 385 (DKVGRRKLM) are cytoplasmic. A helical transmembrane segment spans residues 386-406 (ITFIPGMMIAFTWTIISFHFL). Residues 407 to 427 (TKPTGGLLLKDYQYSTPLVGS) are Extracellular-facing. The chain crosses the membrane as a helical span at residues 428-448 (VLGSIVLFVIPFGLTYSHIIW). The Cytoplasmic segment spans residues 449-461 (YQSEFLPLEIRAA). A helical membrane pass occupies residues 462–482 (GSAISTTACWLANLVVSVAYL). The Extracellular portion of the chain corresponds to 483 to 487 (TQLEK). The chain crosses the membrane as a helical span at residues 488–508 (LGATGTYGLYLGFITIGYIFV). Topologically, residues 509-555 (YFCYPETKGLSIDETAEIFIDGFGIEKAHQMLREKRAFAAELYAGRA) are cytoplasmic.

This sequence belongs to the major facilitator superfamily. Sugar transporter (TC 2.A.1.1) family.

The protein localises to the cell membrane. It carries out the reaction myo-inositol(out) + H(+)(out) = myo-inositol(in) + H(+)(in). In terms of biological role, transporter for myo-inositol. This chain is Myo-inositol transporter 2, found in Cryptococcus neoformans var. grubii serotype A (strain H99 / ATCC 208821 / CBS 10515 / FGSC 9487) (Filobasidiella neoformans var. grubii).